Reading from the N-terminus, the 209-residue chain is uncharacterized protein (209 aa).

Functionally, may influence the expression of the nuc gene. This is an uncharacterized protein from Shigella flexneri.